The primary structure comprises 87 residues: Small ribosomal subunit protein uS17 (87 aa).

Belongs to the universal ribosomal protein uS17 family. In terms of assembly, part of the 30S ribosomal subunit.

Its function is as follows. One of the primary rRNA binding proteins, it binds specifically to the 5'-end of 16S ribosomal RNA. The chain is Small ribosomal subunit protein uS17 from Endomicrobium trichonymphae.